A 235-amino-acid polypeptide reads, in one-letter code: Glutathione S-transferase L3 (235 aa).

One can recognise a GST N-terminal domain in the interval 27–108 (GTTRLYTSYV…YLDNTFEGPS (82 aa)). Glutathione contacts are provided by residues 37–38 (CP), 65–66 (NR), 79–80 (KV), and 92–93 (ES). In terms of domain architecture, GST C-terminal spans 86–230 (NGKIIGESLD…MDPKEIVEVF (145 aa)).

The protein belongs to the GST superfamily. Lambda family.

Its subcellular location is the cytoplasm. It is found in the cytosol. The enzyme catalyses RX + glutathione = an S-substituted glutathione + a halide anion + H(+). Its function is as follows. Catalyzes the glutathione-dependent reduction of S-glutathionylquercetin to quercetin. This Arabidopsis thaliana (Mouse-ear cress) protein is Glutathione S-transferase L3 (GSTL3).